A 709-amino-acid chain; its full sequence is Ribosomal RNA large subunit methyltransferase K/L (709 aa).

Positions 43-154 (LAYRITLWTR…NGVITIAMNF (112 aa)) constitute a THUMP domain.

This sequence belongs to the methyltransferase superfamily. RlmKL family.

It localises to the cytoplasm. It carries out the reaction guanosine(2445) in 23S rRNA + S-adenosyl-L-methionine = N(2)-methylguanosine(2445) in 23S rRNA + S-adenosyl-L-homocysteine + H(+). It catalyses the reaction guanosine(2069) in 23S rRNA + S-adenosyl-L-methionine = N(2)-methylguanosine(2069) in 23S rRNA + S-adenosyl-L-homocysteine + H(+). In terms of biological role, specifically methylates the guanine in position 2445 (m2G2445) and the guanine in position 2069 (m7G2069) of 23S rRNA. This chain is Ribosomal RNA large subunit methyltransferase K/L, found in Shewanella baltica (strain OS185).